Consider the following 497-residue polypeptide: Apolipoprotein N-acyltransferase (497 aa).

6 helical membrane-spanning segments follow: residues 21-41, 51-71, 85-105, 119-139, 157-177, and 189-209; these read FAPFYLYPIPVVTLALLALLW, ALTGFTFGMGLFGAGVTWLYV, VLALIILCAYLALFPALTGWI, GMVAALWALAEWLRGTLFTGF, FAPVIGVYGLSLLLMLSAAWL, and FWLGLGSVWLIGFGLQQIHWT. Residues 221 to 461 enclose the CN hydrolase domain; it reads LQGNIPQNMK…GLHSTAQGFG (241 aa). Catalysis depends on Glu-259, which acts as the Proton acceptor. Lys-319 is a catalytic residue. Cys-371 (nucleophile) is an active-site residue. The chain crosses the membrane as a helical span at residues 472–492; it reads SLVFALIGLLLLAGSLAAFSG.

This sequence belongs to the CN hydrolase family. Apolipoprotein N-acyltransferase subfamily.

The protein localises to the cell inner membrane. It carries out the reaction N-terminal S-1,2-diacyl-sn-glyceryl-L-cysteinyl-[lipoprotein] + a glycerophospholipid = N-acyl-S-1,2-diacyl-sn-glyceryl-L-cysteinyl-[lipoprotein] + a 2-acyl-sn-glycero-3-phospholipid + H(+). Its pathway is protein modification; lipoprotein biosynthesis (N-acyl transfer). Catalyzes the phospholipid dependent N-acylation of the N-terminal cysteine of apolipoprotein, the last step in lipoprotein maturation. This Nitrosomonas europaea (strain ATCC 19718 / CIP 103999 / KCTC 2705 / NBRC 14298) protein is Apolipoprotein N-acyltransferase.